The chain runs to 183 residues: Holliday junction branch migration complex subunit RuvA (183 aa).

Residues 1–64 are domain I; sequence MVVGIEGIIT…EDSNKFYGFL (64 aa). Positions 65-139 are domain II; sequence DKDEQKMFEM…DTKTKLENVS (75 aa). Ser-139 is a region of interest (flexible linker). The tract at residues 139–183 is domain III; that stretch reads SDDKSEALAALLTLGFKQEKIISVLASAQATGTSELIKEALKKLG.

Belongs to the RuvA family. As to quaternary structure, homotetramer. Forms an RuvA(8)-RuvB(12)-Holliday junction (HJ) complex. HJ DNA is sandwiched between 2 RuvA tetramers; dsDNA enters through RuvA and exits via RuvB. An RuvB hexamer assembles on each DNA strand where it exits the tetramer. Each RuvB hexamer is contacted by two RuvA subunits (via domain III) on 2 adjacent RuvB subunits; this complex drives branch migration. In the full resolvosome a probable DNA-RuvA(4)-RuvB(12)-RuvC(2) complex forms which resolves the HJ.

The protein localises to the cytoplasm. Its function is as follows. The RuvA-RuvB-RuvC complex processes Holliday junction (HJ) DNA during genetic recombination and DNA repair, while the RuvA-RuvB complex plays an important role in the rescue of blocked DNA replication forks via replication fork reversal (RFR). RuvA specifically binds to HJ cruciform DNA, conferring on it an open structure. The RuvB hexamer acts as an ATP-dependent pump, pulling dsDNA into and through the RuvAB complex. HJ branch migration allows RuvC to scan DNA until it finds its consensus sequence, where it cleaves and resolves the cruciform DNA. This chain is Holliday junction branch migration complex subunit RuvA, found in Campylobacter jejuni subsp. jejuni serotype O:23/36 (strain 81-176).